We begin with the raw amino-acid sequence, 534 residues long: Paired box protein Pax-1 (534 aa).

Residues 98-224 constitute a DNA-binding region (paired); that stretch reads TYGEVNQLGG…SSISRILRNK (127 aa). The tract at residues 101-157 is PAI subdomain; the sequence is EVNQLGGVFVNGRPLPNAIRLRIVELAQLGIRPCDISRQLRVSHGCVSKILARYNET. The interval 176–224 is RED subdomain; sequence NVVKHIRDYKQGDPGIFAWEIRDRLLADGVCDKYNVPSVSSISRILRNK. 2 disordered regions span residues 424–480 and 492–511; these read PSRE…AAAP and EEEASAGPRGARPASPQAQP.

Its subcellular location is the nucleus. In terms of biological role, this protein is a transcriptional activator. It may play a role in the formation of segmented structures of the embryo. May play an important role in the normal development of the vertebral column. The sequence is that of Paired box protein Pax-1 (PAX1) from Homo sapiens (Human).